A 254-amino-acid polypeptide reads, in one-letter code: Hydroxyacylglutathione hydrolase (254 aa).

7 residues coordinate Zn(2+): histidine 53, histidine 55, aspartate 57, histidine 58, histidine 111, aspartate 128, and histidine 166.

The protein belongs to the metallo-beta-lactamase superfamily. Glyoxalase II family. As to quaternary structure, monomer. It depends on Zn(2+) as a cofactor.

The enzyme catalyses an S-(2-hydroxyacyl)glutathione + H2O = a 2-hydroxy carboxylate + glutathione + H(+). The protein operates within secondary metabolite metabolism; methylglyoxal degradation; (R)-lactate from methylglyoxal: step 2/2. Its function is as follows. Thiolesterase that catalyzes the hydrolysis of S-D-lactoyl-glutathione to form glutathione and D-lactic acid. This chain is Hydroxyacylglutathione hydrolase, found in Aeromonas hydrophila subsp. hydrophila (strain ATCC 7966 / DSM 30187 / BCRC 13018 / CCUG 14551 / JCM 1027 / KCTC 2358 / NCIMB 9240 / NCTC 8049).